The primary structure comprises 256 residues: 1-(5-phosphoribosyl)-5-[(5-phosphoribosylamino)methylideneamino] imidazole-4-carboxamide isomerase (256 aa).

D8 functions as the Proton acceptor in the catalytic mechanism. The active-site Proton donor is the D129.

This sequence belongs to the HisA/HisF family.

Its subcellular location is the cytoplasm. It carries out the reaction 1-(5-phospho-beta-D-ribosyl)-5-[(5-phospho-beta-D-ribosylamino)methylideneamino]imidazole-4-carboxamide = 5-[(5-phospho-1-deoxy-D-ribulos-1-ylimino)methylamino]-1-(5-phospho-beta-D-ribosyl)imidazole-4-carboxamide. Its pathway is amino-acid biosynthesis; L-histidine biosynthesis; L-histidine from 5-phospho-alpha-D-ribose 1-diphosphate: step 4/9. This is 1-(5-phosphoribosyl)-5-[(5-phosphoribosylamino)methylideneamino] imidazole-4-carboxamide isomerase from Synechococcus sp. (strain WH7803).